A 702-amino-acid polypeptide reads, in one-letter code: Arylphorin (702 aa).

An N-terminal signal peptide occupies residues 1–16 (MQTVLFLAALVSLAAA). N-linked (GlcNAc...) asparagine glycans are attached at residues asparagine 211 and asparagine 481.

This sequence belongs to the hemocyanin family. In terms of tissue distribution, hemolymph.

The protein resides in the secreted. Its function is as follows. Larval storage protein (LSP) which may serve as a store of amino acids for synthesis of adult proteins. Binds the A.niger cell wall component alpha-1,3-glucan, a fungal pathogen-associated molecular pattern (PAMP) that activates the host immune response. This Galleria mellonella (Greater wax moth) protein is Arylphorin (LOC113516268).